The sequence spans 122 residues: T-cell receptor beta chain V region C5 (122 aa).

Positions isoleucine 1–histidine 7 are cleaved as a signal peptide. The interval methionine 8–glycine 103 is v segment. Cysteine 31 and cysteine 99 are disulfide-bonded. The d segment stretch occupies residues threonine 104–leucine 108. The tract at residues aspartate 109–leucine 122 is j segment.

The sequence is that of T-cell receptor beta chain V region C5 from Mus musculus (Mouse).